Consider the following 299-residue polypeptide: Type II restriction enzyme BglI (299 aa).

Mg(2+) contacts are provided by Asp-116, Asp-142, and Ile-143.

Homodimer. Mg(2+) is required as a cofactor.

The catalysed reaction is Endonucleolytic cleavage of DNA to give specific double-stranded fragments with terminal 5'-phosphates.. In terms of biological role, a P subtype restriction enzyme that recognizes the double-stranded sequence 5'-GCCNNNNNGGC-3' and cleaves before N-8. The sequence is that of Type II restriction enzyme BglI (bglIR) from Bacillus subtilis.